A 487-amino-acid polypeptide reads, in one-letter code: N-succinylglutamate 5-semialdehyde dehydrogenase (487 aa).

Residue 221–226 participates in NAD(+) binding; that stretch reads GSSRTG. Residues Glu-244 and Cys-278 contribute to the active site.

It belongs to the aldehyde dehydrogenase family. AstD subfamily.

The catalysed reaction is N-succinyl-L-glutamate 5-semialdehyde + NAD(+) + H2O = N-succinyl-L-glutamate + NADH + 2 H(+). It functions in the pathway amino-acid degradation; L-arginine degradation via AST pathway; L-glutamate and succinate from L-arginine: step 4/5. Its function is as follows. Catalyzes the NAD-dependent reduction of succinylglutamate semialdehyde into succinylglutamate. The chain is N-succinylglutamate 5-semialdehyde dehydrogenase from Pseudomonas putida (strain GB-1).